The following is a 107-amino-acid chain: Homeobox protein HD-7 (107 aa).

A DNA-binding region (homeobox) is located at residues K21–N80.

The protein localises to the nucleus. This Encephalitozoon cuniculi (strain GB-M1) (Microsporidian parasite) protein is Homeobox protein HD-7 (HD-7).